The sequence spans 461 residues: Serine--tRNA ligase (461 aa).

The disordered stretch occupies residues 112-134 (EVPFGRDENDNREHHTFGEKPRF). Positions 114–134 (PFGRDENDNREHHTFGEKPRF) are enriched in basic and acidic residues. 252-254 (TAE) serves as a coordination point for L-serine. 283–285 (RAE) lines the ATP pocket. An L-serine-binding site is contributed by glutamate 306. 370–373 (EISS) lines the ATP pocket. Position 406 (serine 406) interacts with L-serine.

It belongs to the class-II aminoacyl-tRNA synthetase family. Type-1 seryl-tRNA synthetase subfamily. As to quaternary structure, homodimer. The tRNA molecule binds across the dimer.

Its subcellular location is the cytoplasm. The enzyme catalyses tRNA(Ser) + L-serine + ATP = L-seryl-tRNA(Ser) + AMP + diphosphate + H(+). It carries out the reaction tRNA(Sec) + L-serine + ATP = L-seryl-tRNA(Sec) + AMP + diphosphate + H(+). It functions in the pathway aminoacyl-tRNA biosynthesis; selenocysteinyl-tRNA(Sec) biosynthesis; L-seryl-tRNA(Sec) from L-serine and tRNA(Sec): step 1/1. Functionally, catalyzes the attachment of serine to tRNA(Ser). Is also able to aminoacylate tRNA(Sec) with serine, to form the misacylated tRNA L-seryl-tRNA(Sec), which will be further converted into selenocysteinyl-tRNA(Sec). The protein is Serine--tRNA ligase of Methylocella silvestris (strain DSM 15510 / CIP 108128 / LMG 27833 / NCIMB 13906 / BL2).